The following is a 572-amino-acid chain: Proline--tRNA ligase (572 aa).

This sequence belongs to the class-II aminoacyl-tRNA synthetase family. ProS type 1 subfamily. In terms of assembly, homodimer.

The protein localises to the cytoplasm. It carries out the reaction tRNA(Pro) + L-proline + ATP = L-prolyl-tRNA(Pro) + AMP + diphosphate. Its function is as follows. Catalyzes the attachment of proline to tRNA(Pro) in a two-step reaction: proline is first activated by ATP to form Pro-AMP and then transferred to the acceptor end of tRNA(Pro). As ProRS can inadvertently accommodate and process non-cognate amino acids such as alanine and cysteine, to avoid such errors it has two additional distinct editing activities against alanine. One activity is designated as 'pretransfer' editing and involves the tRNA(Pro)-independent hydrolysis of activated Ala-AMP. The other activity is designated 'posttransfer' editing and involves deacylation of mischarged Ala-tRNA(Pro). The misacylated Cys-tRNA(Pro) is not edited by ProRS. The protein is Proline--tRNA ligase of Edwardsiella ictaluri (strain 93-146).